Consider the following 727-residue polypeptide: E3 ubiquitin-protein ligase LRSAM1 (727 aa).

6 LRR repeats span residues 30–51 (ADDI…AFAT), 56–77 (QKKV…SCSL), 82–103 (TIKV…MGQL), 105–126 (VLQV…IGNL), 128–150 (QLQT…GELR), and 151–172 (SLRT…LAHV). The segment at 227–248 (GAENTQDSPDGPASRFSREEAE) is disordered. Ser234 is modified (phosphoserine). Coiled-coil stretches lie at residues 241-382 (RFSR…NLRQ) and 469-547 (RQIR…QENY). The SAM domain maps to 569–632 (GMERRLVALL…LRRAQDLLAV (64 aa)). Ser604 carries the phosphoserine modification. 2 consecutive short sequence motifs (PTAP motif) follow at residues 653–656 (PTAP) and 665–668 (PSAP). The RING-type zinc finger occupies 679–714 (CVVCLEREAQMVFLTCGHVCCCQQCCQPLRTCPLCR).

In terms of assembly, interacts with TSG101. Interacts with PHF23. Interacts with FUS. In terms of processing, ubiquitination promoted by PHF23 leads to proteasomal degradation. Widely expressed.

It localises to the cytoplasm. The catalysed reaction is S-ubiquitinyl-[E2 ubiquitin-conjugating enzyme]-L-cysteine + [acceptor protein]-L-lysine = [E2 ubiquitin-conjugating enzyme]-L-cysteine + N(6)-ubiquitinyl-[acceptor protein]-L-lysine.. It participates in protein modification; protein ubiquitination. Functionally, E3 ubiquitin-protein ligase that mediates monoubiquitination of TSG101 at multiple sites, leading to inactivate the ability of TSG101 to sort endocytic (EGF receptors) and exocytic (viral proteins) cargos. Bacterial recognition protein that defends the cytoplasm from invasive pathogens. Localizes to several intracellular bacterial pathogens and generates the bacteria-associated ubiquitin signal leading to autophagy-mediated intracellular bacteria degradation (xenophagy). This is E3 ubiquitin-protein ligase LRSAM1 from Mus musculus (Mouse).